Consider the following 221-residue polypeptide: Alpha-ketoglutarate-dependent dioxygenase alkB homolog 7, mitochondrial (221 aa).

The transit peptide at 1–23 directs the protein to the mitochondrion; it reads MAGSRRLAMRLLSGCAWVRGSDS. Fe cation-binding residues include histidine 121 and aspartate 123. Tyrosine 165 provides a ligand contact to 2-oxoglutarate. Histidine 177 is a Fe cation binding site. 2-oxoglutarate-binding positions include 197-199 and arginine 203; that span reads RIS.

Belongs to the alkB family. Requires Fe(2+) as cofactor. In terms of tissue distribution, widely expressed.

The protein resides in the mitochondrion matrix. Functionally, may function as protein hydroxylase; can catalyze auto-hydroxylation at Leu-110 (in vitro), but this activity may be due to the absence of the true substrate. Required to induce programmed necrosis in response to DNA damage caused by cytotoxic alkylating agents. Acts by triggering the collapse of mitochondrial membrane potential and loss of mitochondrial function that leads to energy depletion and cell death. ALKBH7-mediated necrosis is probably required to prevent the accumulation of cells with DNA damage. Does not display DNA demethylase activity. Involved in fatty acid metabolism. This is Alpha-ketoglutarate-dependent dioxygenase alkB homolog 7, mitochondrial (Alkbh7) from Mus musculus (Mouse).